Here is a 379-residue protein sequence, read N- to C-terminus: UDP-4-amino-4-deoxy-L-arabinose--oxoglutarate aminotransferase (379 aa).

An N6-(pyridoxal phosphate)lysine modification is found at Lys182.

Belongs to the DegT/DnrJ/EryC1 family. ArnB subfamily. In terms of assembly, homodimer. Requires pyridoxal 5'-phosphate as cofactor.

The enzyme catalyses UDP-4-amino-4-deoxy-beta-L-arabinose + 2-oxoglutarate = UDP-beta-L-threo-pentopyranos-4-ulose + L-glutamate. It functions in the pathway nucleotide-sugar biosynthesis; UDP-4-deoxy-4-formamido-beta-L-arabinose biosynthesis; UDP-4-deoxy-4-formamido-beta-L-arabinose from UDP-alpha-D-glucuronate: step 2/3. It participates in bacterial outer membrane biogenesis; lipopolysaccharide biosynthesis. Its function is as follows. Catalyzes the conversion of UDP-4-keto-arabinose (UDP-Ara4O) to UDP-4-amino-4-deoxy-L-arabinose (UDP-L-Ara4N). The modified arabinose is attached to lipid A and is required for resistance to polymyxin and cationic antimicrobial peptides. The protein is UDP-4-amino-4-deoxy-L-arabinose--oxoglutarate aminotransferase of Klebsiella pneumoniae (strain 342).